The sequence spans 310 residues: Homoserine kinase (310 aa).

91-101 (PIGSGLGSSAC) contributes to the ATP binding site.

This sequence belongs to the GHMP kinase family. Homoserine kinase subfamily.

It is found in the cytoplasm. It carries out the reaction L-homoserine + ATP = O-phospho-L-homoserine + ADP + H(+). The protein operates within amino-acid biosynthesis; L-threonine biosynthesis; L-threonine from L-aspartate: step 4/5. In terms of biological role, catalyzes the ATP-dependent phosphorylation of L-homoserine to L-homoserine phosphate. This is Homoserine kinase from Escherichia coli (strain SE11).